A 441-amino-acid polypeptide reads, in one-letter code: uncharacterized protein (441 aa).

Over residues 121 to 143 (TLSPSIVSEQQQQQQQQQQQQQQ) the composition is skewed to low complexity. Disordered regions lie at residues 121–146 (TLSPSIVSEQQQQQQQQQQQQQQAIS) and 371–392 (SDADTDSDSEHPTSAPSTTAPN). Polar residues predominate over residues 382–391 (PTSAPSTTAP).

This is an uncharacterized protein from Dictyostelium discoideum (Social amoeba).